The primary structure comprises 427 residues: 3-phosphoshikimate 1-carboxyvinyltransferase (427 aa).

Residues K23, S24, and R28 each coordinate 3-phosphoshikimate. Phosphoenolpyruvate is bound at residue K23. Residues G97 and R125 each contribute to the phosphoenolpyruvate site. 3-phosphoshikimate-binding residues include S170, S171, Q172, S198, D314, N337, and K341. Q172 serves as a coordination point for phosphoenolpyruvate. The active-site Proton acceptor is D314. Positions 345, 387, and 412 each coordinate phosphoenolpyruvate.

This sequence belongs to the EPSP synthase family. In terms of assembly, monomer.

It localises to the cytoplasm. It catalyses the reaction 3-phosphoshikimate + phosphoenolpyruvate = 5-O-(1-carboxyvinyl)-3-phosphoshikimate + phosphate. The protein operates within metabolic intermediate biosynthesis; chorismate biosynthesis; chorismate from D-erythrose 4-phosphate and phosphoenolpyruvate: step 6/7. Its function is as follows. Catalyzes the transfer of the enolpyruvyl moiety of phosphoenolpyruvate (PEP) to the 5-hydroxyl of shikimate-3-phosphate (S3P) to produce enolpyruvyl shikimate-3-phosphate and inorganic phosphate. The polypeptide is 3-phosphoshikimate 1-carboxyvinyltransferase (Buchnera aphidicola subsp. Baizongia pistaciae (strain Bp)).